The sequence spans 396 residues: Elongation factor Tu (396 aa).

Positions 10 to 206 (KPHVNVGTIG…ALDSYIPEPE (197 aa)) constitute a tr-type G domain. The tract at residues 19 to 26 (GHVDHGKT) is G1. Position 19–26 (19–26 (GHVDHGKT)) interacts with GTP. Residue Thr-26 participates in Mg(2+) binding. Residues 60-64 (GITIN) form a G2 region. The tract at residues 81–84 (DCPG) is G3. GTP contacts are provided by residues 81 to 85 (DCPGH) and 136 to 139 (NKCD). The tract at residues 136 to 139 (NKCD) is G4. Positions 174–176 (SAL) are G5.

Belongs to the TRAFAC class translation factor GTPase superfamily. Classic translation factor GTPase family. EF-Tu/EF-1A subfamily. As to quaternary structure, monomer.

It localises to the cytoplasm. It carries out the reaction GTP + H2O = GDP + phosphate + H(+). GTP hydrolase that promotes the GTP-dependent binding of aminoacyl-tRNA to the A-site of ribosomes during protein biosynthesis. The protein is Elongation factor Tu of Acinetobacter baumannii (strain ATCC 17978 / DSM 105126 / CIP 53.77 / LMG 1025 / NCDC KC755 / 5377).